The sequence spans 236 residues: Small ribosomal subunit protein uS2c (236 aa).

This sequence belongs to the universal ribosomal protein uS2 family.

It localises to the plastid. Its subcellular location is the chloroplast. The polypeptide is Small ribosomal subunit protein uS2c (rps2) (Manihot esculenta (Cassava)).